The primary structure comprises 1064 residues: Error-prone DNA polymerase (1064 aa).

This sequence belongs to the DNA polymerase type-C family. DnaE2 subfamily.

Its subcellular location is the cytoplasm. It catalyses the reaction DNA(n) + a 2'-deoxyribonucleoside 5'-triphosphate = DNA(n+1) + diphosphate. Its function is as follows. DNA polymerase involved in damage-induced mutagenesis and translesion synthesis (TLS). It is not the major replicative DNA polymerase. The protein is Error-prone DNA polymerase of Azoarcus sp. (strain BH72).